The sequence spans 164 residues: Lipoprotein signal peptidase (164 aa).

The next 3 membrane-spanning stretches (helical) occupy residues 12-32, 70-90, and 102-122; these read WLWL…LILQ, WFFA…MYRS, and ALII…GFVV. Residues D123 and D141 contribute to the active site. Residues 137–157 form a helical membrane-spanning segment; it reads FNLADTAICVGAALIVLEGFL.

It belongs to the peptidase A8 family.

The protein resides in the cell inner membrane. It carries out the reaction Release of signal peptides from bacterial membrane prolipoproteins. Hydrolyzes -Xaa-Yaa-Zaa-|-(S,diacylglyceryl)Cys-, in which Xaa is hydrophobic (preferably Leu), and Yaa (Ala or Ser) and Zaa (Gly or Ala) have small, neutral side chains.. Its pathway is protein modification; lipoprotein biosynthesis (signal peptide cleavage). In terms of biological role, this protein specifically catalyzes the removal of signal peptides from prolipoproteins. In Escherichia coli O157:H7, this protein is Lipoprotein signal peptidase.